A 371-amino-acid polypeptide reads, in one-letter code: Cytochrome b (371 aa).

4 consecutive transmembrane segments (helical) span residues F25 to I45, W69 to I90, W105 to L125, and F170 to I190. H75 and H89 together coordinate heme b. Heme b-binding residues include H174 and H188. An a ubiquinone-binding site is contributed by H193. Transmembrane regions (helical) follow at residues Y218–S238, L280–H300, F312–T332, and F339–P358.

It belongs to the cytochrome b family. In terms of assembly, the cytochrome bc1 complex contains 3 respiratory subunits (MT-CYB, CYC1 and UQCRFS1), 2 core proteins (UQCRC1 and UQCRC2) and probably 6 low-molecular weight proteins. Requires heme b as cofactor.

It localises to the mitochondrion inner membrane. Component of the ubiquinol-cytochrome c reductase complex (complex III or cytochrome b-c1 complex) that is part of the mitochondrial respiratory chain. The b-c1 complex mediates electron transfer from ubiquinol to cytochrome c. Contributes to the generation of a proton gradient across the mitochondrial membrane that is then used for ATP synthesis. This chain is Cytochrome b (MT-CYB), found in Elapognathus coronatus (Western crowned snake).